Here is a 324-residue protein sequence, read N- to C-terminus: Acetyl-coenzyme A carboxylase carboxyl transferase subunit beta (324 aa).

Positions 28–297 constitute a CoA carboxyltransferase N-terminal domain; it reads LWCKCPSCNA…AVAPAAAKAP (270 aa). Cys-32, Cys-35, Cys-51, and Cys-54 together coordinate Zn(2+). A C4-type zinc finger spans residues 32–54; the sequence is CPSCNAILYKSEVERNLEVCPKC.

The protein belongs to the AccD/PCCB family. In terms of assembly, acetyl-CoA carboxylase is a heterohexamer composed of biotin carboxyl carrier protein (AccB), biotin carboxylase (AccC) and two subunits each of ACCase subunit alpha (AccA) and ACCase subunit beta (AccD). Requires Zn(2+) as cofactor.

The protein localises to the cytoplasm. It carries out the reaction N(6)-carboxybiotinyl-L-lysyl-[protein] + acetyl-CoA = N(6)-biotinyl-L-lysyl-[protein] + malonyl-CoA. The protein operates within lipid metabolism; malonyl-CoA biosynthesis; malonyl-CoA from acetyl-CoA: step 1/1. In terms of biological role, component of the acetyl coenzyme A carboxylase (ACC) complex. Biotin carboxylase (BC) catalyzes the carboxylation of biotin on its carrier protein (BCCP) and then the CO(2) group is transferred by the transcarboxylase to acetyl-CoA to form malonyl-CoA. The sequence is that of Acetyl-coenzyme A carboxylase carboxyl transferase subunit beta from Methylococcus capsulatus (strain ATCC 33009 / NCIMB 11132 / Bath).